Here is a 487-residue protein sequence, read N- to C-terminus: E3 ubiquitin-protein ligase RNF8 (487 aa).

Positions 38 to 92 (VTIGRGFSVTYQLISKVCPLMISRNHCVLKQNPEGQWTIMDNKSLNGVWLNRERL) constitute an FHA domain. Residues 68-72 (QNPEG) form a required for interaction with PIWIL1 region. Residues 135–195 (CLAPKNDHTT…PEKLHGKGEA (61 aa)) form a disordered region. A Phosphoserine modification is found at Ser-157. Residues 184–193 (AEPEKLHGKG) are compositionally biased toward basic and acidic residues. The RING-type zinc-finger motif lies at 405–443 (CIICSEYFIEAVTLNCAHSFCSFCISEWMKRKVECPICR).

The protein belongs to the RNF8 family. Homodimer. Forms a E2-E3 ubiquitin ligase complex composed of the RNF8 homodimer and a E2 heterodimer of UBE2N and UBE2V2. Interacts with class III E2s, including UBE2E1, UBE2E2, and UBE2E3 and with UBE2N. Interacts with RXRA. Interacts (via FHA domain) with phosphorylated HERC2 (via C-terminus). Interacts with PIWIL1; leading to sequester RNF8 in the cytoplasm. Interacts with WRAP53/TCAB1. Post-translationally, autoubiquitinated through 'Lys-48' and 'Lys-63' of ubiquitin. 'Lys-63' polyubiquitination is mediated by UBE2N. 'Lys-29'-type polyubiquitination is also observed, but it doesn't require its own functional RING-type zinc finger.

The protein resides in the nucleus. It is found in the cytoplasm. Its subcellular location is the midbody. It localises to the chromosome. The protein localises to the telomere. The catalysed reaction is S-ubiquitinyl-[E2 ubiquitin-conjugating enzyme]-L-cysteine + [acceptor protein]-L-lysine = [E2 ubiquitin-conjugating enzyme]-L-cysteine + N(6)-ubiquitinyl-[acceptor protein]-L-lysine.. Its pathway is protein modification; protein ubiquitination. Functionally, E3 ubiquitin-protein ligase that plays a key role in DNA damage signaling via 2 distinct roles: by mediating the 'Lys-63'-linked ubiquitination of histones H2A and H2AX and promoting the recruitment of DNA repair proteins at double-strand breaks (DSBs) sites, and by catalyzing 'Lys-48'-linked ubiquitination to remove target proteins from DNA damage sites. Following DNA DSBs, it is recruited to the sites of damage by ATM-phosphorylated MDC1 and catalyzes the 'Lys-63'-linked ubiquitination of histones H2A and H2AX, thereby promoting the formation of TP53BP1 and BRCA1 ionizing radiation-induced foci (IRIF). Also controls the recruitment of UIMC1-BRCC3 (RAP80-BRCC36) and PAXIP1/PTIP to DNA damage sites. Promotes the recruitment of NBN to DNA damage sites by catalyzing 'Lys-6'-linked ubiquitination of NBN. Also recruited at DNA interstrand cross-links (ICLs) sites and catalyzes 'Lys-63'-linked ubiquitination of histones H2A and H2AX, leading to recruitment of FAAP20 and Fanconi anemia (FA) complex, followed by interstrand cross-link repair. H2A ubiquitination also mediates the ATM-dependent transcriptional silencing at regions flanking DSBs in cis, a mechanism to avoid collision between transcription and repair intermediates. Promotes the formation of 'Lys-63'-linked polyubiquitin chains via interactions with the specific ubiquitin-conjugating UBE2N/UBC13 and ubiquitinates non-histone substrates such as PCNA. Substrates that are polyubiquitinated at 'Lys-63' are usually not targeted for degradation. Also catalyzes the formation of 'Lys-48'-linked polyubiquitin chains via interaction with the ubiquitin-conjugating UBE2L6/UBCH8, leading to degradation of substrate proteins such as CHEK2, JMJD2A/KDM4A and KU80/XRCC5: it is still unclear how the preference toward 'Lys-48'- versus 'Lys-63'-linked ubiquitination is regulated but it could be due to RNF8 ability to interact with specific E2 specific ligases. For instance, interaction with phosphorylated HERC2 promotes the association between RNF8 and UBE2N/UBC13 and favors the specific formation of 'Lys-63'-linked ubiquitin chains. Promotes non-homologous end joining (NHEJ) by promoting the 'Lys-48'-linked ubiquitination and degradation the of KU80/XRCC5. Following DNA damage, mediates the ubiquitination and degradation of JMJD2A/KDM4A in collaboration with RNF168, leading to unmask H4K20me2 mark and promote the recruitment of TP53BP1 at DNA damage sites. Following DNA damage, mediates the ubiquitination and degradation of POLD4/p12, a subunit of DNA polymerase delta. In the absence of POLD4, DNA polymerase delta complex exhibits higher proofreading activity. In addition to its function in damage signaling, also plays a role in higher-order chromatin structure by mediating extensive chromatin decondensation. Involved in the activation of ATM by promoting histone H2B ubiquitination, which indirectly triggers histone H4 'Lys-16' acetylation (H4K16ac), establishing a chromatin environment that promotes efficient activation of ATM kinase. Required in the testis, where it plays a role in the replacement of histones during spermatogenesis. At uncapped telomeres, promotes the joining of deprotected chromosome ends by inducing H2A ubiquitination and TP53BP1 recruitment, suggesting that it may enhance cancer development by aggravating telomere-induced genome instability in case of telomeric crisis. Promotes the assembly of RAD51 at DNA DSBs in the absence of BRCA1 and TP53BP1 Also involved in class switch recombination in immune system, via its role in regulation of DSBs repair. May be required for proper exit from mitosis after spindle checkpoint activation and may regulate cytokinesis. May play a role in the regulation of RXRA-mediated transcriptional activity. Not involved in RXRA ubiquitination by UBE2E2. The chain is E3 ubiquitin-protein ligase RNF8 from Rattus norvegicus (Rat).